A 420-amino-acid polypeptide reads, in one-letter code: UDP-N-acetylglucosamine 1-carboxyvinyltransferase (420 aa).

Lysine 22–asparagine 23 is a phosphoenolpyruvate binding site. Arginine 93 is a binding site for UDP-N-acetyl-alpha-D-glucosamine. The active-site Proton donor is the cysteine 117. Cysteine 117 carries the post-translational modification 2-(S-cysteinyl)pyruvic acid O-phosphothioketal. 2 residues coordinate UDP-N-acetyl-alpha-D-glucosamine: aspartate 307 and valine 329.

Belongs to the EPSP synthase family. MurA subfamily.

It localises to the cytoplasm. It catalyses the reaction phosphoenolpyruvate + UDP-N-acetyl-alpha-D-glucosamine = UDP-N-acetyl-3-O-(1-carboxyvinyl)-alpha-D-glucosamine + phosphate. It participates in cell wall biogenesis; peptidoglycan biosynthesis. Cell wall formation. Adds enolpyruvyl to UDP-N-acetylglucosamine. This Marinobacter nauticus (strain ATCC 700491 / DSM 11845 / VT8) (Marinobacter aquaeolei) protein is UDP-N-acetylglucosamine 1-carboxyvinyltransferase.